The sequence spans 576 residues: Aspartate--tRNA ligase (576 aa).

L-aspartate is bound at residue Glu170. The tract at residues 194–197 (QLFK) is aspartate. An L-aspartate-binding site is contributed by Arg216. Residues 216–218 (RDE) and Gln225 each bind ATP. His438 is an L-aspartate binding site. ATP is bound at residue Glu471. Arg478 contacts L-aspartate. ATP is bound at residue 523–526 (GLDR).

This sequence belongs to the class-II aminoacyl-tRNA synthetase family. Type 1 subfamily. Homodimer.

It is found in the cytoplasm. It carries out the reaction tRNA(Asp) + L-aspartate + ATP = L-aspartyl-tRNA(Asp) + AMP + diphosphate. Its function is as follows. Catalyzes the attachment of L-aspartate to tRNA(Asp) in a two-step reaction: L-aspartate is first activated by ATP to form Asp-AMP and then transferred to the acceptor end of tRNA(Asp). In Fervidobacterium nodosum (strain ATCC 35602 / DSM 5306 / Rt17-B1), this protein is Aspartate--tRNA ligase.